A 388-amino-acid chain; its full sequence is tRNA (guanine-N(7)-)-methyltransferase (388 aa).

Residues E129, E154, and D181 each coordinate S-adenosyl-L-methionine. Substrate-binding residues include K207 and D237.

This sequence belongs to the class I-like SAM-binding methyltransferase superfamily. TrmB family.

It catalyses the reaction guanosine(46) in tRNA + S-adenosyl-L-methionine = N(7)-methylguanosine(46) in tRNA + S-adenosyl-L-homocysteine. Its pathway is tRNA modification; N(7)-methylguanine-tRNA biosynthesis. Its function is as follows. Catalyzes the formation of N(7)-methylguanine at position 46 (m7G46) in tRNA. This Wolinella succinogenes (strain ATCC 29543 / DSM 1740 / CCUG 13145 / JCM 31913 / LMG 7466 / NCTC 11488 / FDC 602W) (Vibrio succinogenes) protein is tRNA (guanine-N(7)-)-methyltransferase.